Consider the following 140-residue polypeptide: Mitochondrial import receptor subunit TOM22 homolog (140 aa).

Residues 1–11 (MAAAAAGPGAP) show a composition bias toward low complexity. Residues 1–40 (MAAAAAGPGAPLSADELLPKGDAEKPEEELEEEDDEELDE) form a disordered region. Over 1–81 (MAAAAAGPGA…AQKMYRFSRA (81 aa)) the chain is Cytoplasmic. Position 13 is a phosphoserine (Ser13). Positions 25 to 40 (KPEEELEEEDDEELDE) are enriched in acidic residues. An import sequence; necessary for mitochondrion outer membrane localization and integration in the TOM complex region spans residues 39–48 (DETLSERLWG). Residue Thr41 is modified to Phosphothreonine. A Phosphoserine modification is found at Ser43. Residues 81–101 (AALWIGTTSFMILVLPVVFET) form a TMD; necessary for mitochondrion outer membrane localization and integration in the TOM complex region. The chain crosses the membrane as a helical span at residues 82–101 (ALWIGTTSFMILVLPVVFET). The Mitochondrial intermembrane segment spans residues 102–140 (EKLQMEQQQQLQQRQILLGPNTGLSGGMPGALPSLPGKI). The interval 121–140 (PNTGLSGGMPGALPSLPGKI) is C-tail signal; necessary for mitochondrion outer membrane localization and integration in the TOM complex.

This sequence belongs to the Tom22 family. Forms part of the preprotein translocase complex of the outer mitochondrial membrane (TOM complex) which consists of at least 7 different proteins (TOMM5, TOMM6, TOMM7, TOMM20, TOMM22, TOMM40 and TOMM70). Interacts with PPP2R2B and TOMM40.

It is found in the mitochondrion outer membrane. In terms of biological role, central receptor component of the translocase of the outer membrane of mitochondria (TOM complex) responsible for the recognition and translocation of cytosolically synthesized mitochondrial preproteins. Together with the peripheral receptor TOM20 functions as the transit peptide receptor and facilitates the movement of preproteins into the translocation pore. Required for the translocation across the mitochondrial outer membrane of cytochrome P450 monooxygenases. The chain is Mitochondrial import receptor subunit TOM22 homolog (TOMM22) from Bos taurus (Bovine).